Reading from the N-terminus, the 204-residue chain is Elongation factor Ts (204 aa).

An involved in Mg(2+) ion dislocation from EF-Tu region spans residues 87 to 90; that stretch reads TDFV.

It belongs to the EF-Ts family.

The protein resides in the cytoplasm. Functionally, associates with the EF-Tu.GDP complex and induces the exchange of GDP to GTP. It remains bound to the aminoacyl-tRNA.EF-Tu.GTP complex up to the GTP hydrolysis stage on the ribosome. This is Elongation factor Ts from Frankia casuarinae (strain DSM 45818 / CECT 9043 / HFP020203 / CcI3).